A 314-amino-acid polypeptide reads, in one-letter code: Thymidylate synthase (314 aa).

DUMP-binding positions include Arg21 and 176 to 177; that span reads RR. Cys196 serves as the catalytic Nucleophile. Residues 216–219, Asn227, and 257–259 contribute to the dUMP site; these read RSAD and HLY. A (6R)-5,10-methylene-5,6,7,8-tetrahydrofolate-binding site is contributed by Asp219. Ser313 provides a ligand contact to (6R)-5,10-methylene-5,6,7,8-tetrahydrofolate.

This sequence belongs to the thymidylate synthase family. Bacterial-type ThyA subfamily. As to quaternary structure, homodimer.

The protein localises to the cytoplasm. The enzyme catalyses dUMP + (6R)-5,10-methylene-5,6,7,8-tetrahydrofolate = 7,8-dihydrofolate + dTMP. It participates in pyrimidine metabolism; dTTP biosynthesis. Its function is as follows. Catalyzes the reductive methylation of 2'-deoxyuridine-5'-monophosphate (dUMP) to 2'-deoxythymidine-5'-monophosphate (dTMP) while utilizing 5,10-methylenetetrahydrofolate (mTHF) as the methyl donor and reductant in the reaction, yielding dihydrofolate (DHF) as a by-product. This enzymatic reaction provides an intracellular de novo source of dTMP, an essential precursor for DNA biosynthesis. The protein is Thymidylate synthase of Listeria monocytogenes serotype 4b (strain F2365).